We begin with the raw amino-acid sequence, 129 residues long: Small ribosomal subunit protein uS11 (129 aa).

This sequence belongs to the universal ribosomal protein uS11 family. In terms of assembly, part of the 30S ribosomal subunit. Interacts with proteins S7 and S18. Binds to IF-3.

Functionally, located on the platform of the 30S subunit, it bridges several disparate RNA helices of the 16S rRNA. Forms part of the Shine-Dalgarno cleft in the 70S ribosome. This chain is Small ribosomal subunit protein uS11, found in Aromatoleum aromaticum (strain DSM 19018 / LMG 30748 / EbN1) (Azoarcus sp. (strain EbN1)).